Reading from the N-terminus, the 473-residue chain is Ribulose bisphosphate carboxylase large chain (473 aa).

2 residues coordinate substrate: Asn116 and Thr166. The active-site Proton acceptor is the Lys168. Lys170 contacts substrate. Mg(2+)-binding residues include Lys194, Asp196, and Glu197. Position 194 is an N6-carboxylysine (Lys194). Residue His287 is the Proton acceptor of the active site. Substrate contacts are provided by Arg288, His320, and Ser372.

This sequence belongs to the RuBisCO large chain family. Type I subfamily. Heterohexadecamer of 8 large chains and 8 small chains. Mg(2+) is required as a cofactor.

It carries out the reaction 2 (2R)-3-phosphoglycerate + 2 H(+) = D-ribulose 1,5-bisphosphate + CO2 + H2O. The catalysed reaction is D-ribulose 1,5-bisphosphate + O2 = 2-phosphoglycolate + (2R)-3-phosphoglycerate + 2 H(+). In terms of biological role, ruBisCO catalyzes two reactions: the carboxylation of D-ribulose 1,5-bisphosphate, the primary event in carbon dioxide fixation, as well as the oxidative fragmentation of the pentose substrate. Both reactions occur simultaneously and in competition at the same active site. The sequence is that of Ribulose bisphosphate carboxylase large chain from Nitrosomonas eutropha (strain DSM 101675 / C91 / Nm57).